A 109-amino-acid polypeptide reads, in one-letter code: uncharacterized protein (109 aa).

It to M.jannaschii MJ1244 and MJ1245 and M.thermoautotrophicum MTH1110.

This is an uncharacterized protein from Methanococcus maripaludis (Methanococcus deltae).